The sequence spans 346 residues: NADH-ubiquinone oxidoreductase chain 2 (346 aa).

Helical transmembrane passes span 1-21 (MNPH…TITI), 25-45 (HWVL…PLIS), 60-80 (FLTQ…NAWA), 95-115 (CLLL…HFWF), 124-144 (LMTA…LLLM), 149-169 (LNPA…GWMG), 178-195 (ILAF…IILV), 200-219 (LALL…FMAL), 242-262 (ATLM…GFMP), 274-294 (EMTP…FFYL), and 326-346 (AILA…HAIV).

Belongs to the complex I subunit 2 family.

It is found in the mitochondrion inner membrane. The catalysed reaction is a ubiquinone + NADH + 5 H(+)(in) = a ubiquinol + NAD(+) + 4 H(+)(out). Core subunit of the mitochondrial membrane respiratory chain NADH dehydrogenase (Complex I) that is believed to belong to the minimal assembly required for catalysis. Complex I functions in the transfer of electrons from NADH to the respiratory chain. The immediate electron acceptor for the enzyme is believed to be ubiquinone. The polypeptide is NADH-ubiquinone oxidoreductase chain 2 (MT-ND2) (Anas acuta (Northern pintail)).